A 160-amino-acid chain; its full sequence is Phosphopantetheine adenylyltransferase (160 aa).

Thr-11 provides a ligand contact to substrate. ATP contacts are provided by residues 11-12 (TF) and His-19. Substrate contacts are provided by Lys-43, Thr-75, and Arg-89. Residues 90 to 92 (GLR), Glu-100, and 125 to 131 (YSFLSSS) each bind ATP.

Belongs to the bacterial CoaD family. As to quaternary structure, homohexamer. Mg(2+) is required as a cofactor.

It localises to the cytoplasm. It catalyses the reaction (R)-4'-phosphopantetheine + ATP + H(+) = 3'-dephospho-CoA + diphosphate. Its pathway is cofactor biosynthesis; coenzyme A biosynthesis; CoA from (R)-pantothenate: step 4/5. Its function is as follows. Reversibly transfers an adenylyl group from ATP to 4'-phosphopantetheine, yielding dephospho-CoA (dPCoA) and pyrophosphate. The chain is Phosphopantetheine adenylyltransferase from Listeria monocytogenes serotype 4b (strain CLIP80459).